Reading from the N-terminus, the 286-residue chain is Pantothenate synthetase (286 aa).

30–37 (MGFLHEGH) contributes to the ATP binding site. H37 serves as the catalytic Proton donor. Q61 lines the (R)-pantoate pocket. Position 61 (Q61) interacts with beta-alanine. Residue 147 to 150 (GLKD) participates in ATP binding. Position 153 (Q153) interacts with (R)-pantoate. Residues V176 and 184-187 (KSSR) each bind ATP.

It belongs to the pantothenate synthetase family. As to quaternary structure, homodimer.

The protein localises to the cytoplasm. It catalyses the reaction (R)-pantoate + beta-alanine + ATP = (R)-pantothenate + AMP + diphosphate + H(+). It participates in cofactor biosynthesis; (R)-pantothenate biosynthesis; (R)-pantothenate from (R)-pantoate and beta-alanine: step 1/1. Its function is as follows. Catalyzes the condensation of pantoate with beta-alanine in an ATP-dependent reaction via a pantoyl-adenylate intermediate. In Bacillus subtilis (strain 168), this protein is Pantothenate synthetase.